A 281-amino-acid chain; its full sequence is Energy-coupling factor transporter ATP-binding protein EcfA1 (281 aa).

In terms of domain architecture, ABC transporter spans 6–245 (IKSEDLVFKY…VEKIKSIGLD (240 aa)). 44-51 (GHNGSGKS) serves as a coordination point for ATP.

The protein belongs to the ABC transporter superfamily. Energy-coupling factor EcfA family. As to quaternary structure, forms a stable energy-coupling factor (ECF) transporter complex composed of 2 membrane-embedded substrate-binding proteins (S component), 2 ATP-binding proteins (A component) and 2 transmembrane proteins (T component).

It localises to the cell membrane. Its function is as follows. ATP-binding (A) component of a common energy-coupling factor (ECF) ABC-transporter complex. Unlike classic ABC transporters this ECF transporter provides the energy necessary to transport a number of different substrates. In Clostridium perfringens (strain ATCC 13124 / DSM 756 / JCM 1290 / NCIMB 6125 / NCTC 8237 / Type A), this protein is Energy-coupling factor transporter ATP-binding protein EcfA1.